The chain runs to 212 residues: Stage 0 sporulation protein A (212 aa).

A Response regulatory domain is found at 5–123 (EVLLADDNRE…VLAQRIRQII (119 aa)). 3 residues coordinate Ca(2+): Asp-10, Asp-11, and Asp-56. Asp-56 is modified (4-aspartylphosphate). The H-T-H motif DNA-binding region spans 194–212 (PDIAKKFNTTASHVERAIR).

Requires Ca(2+) as cofactor. Phosphorylated by KinA and KinB.

It localises to the cytoplasm. In terms of biological role, may play the central regulatory role in sporulation. It may be an element of the effector pathway responsible for the activation of sporulation genes in response to nutritional stress. Spo0A may act in concert with Spo0H (a sigma factor) to control the expression of some genes that are critical to the sporulation process. Repressor of abrB, activator of the spoIIa operon. Binds the DNA sequence 5'-TGNCGAA-3' (0A box). The sequence is that of Stage 0 sporulation protein A (spo0A) from Brevibacillus parabrevis.